The sequence spans 541 residues: Long-chain-fatty-acid--CoA ligase (541 aa).

Residue threonine 184 coordinates Mg(2+). ATP is bound by residues valine 231 and tryptophan 234. Residues glycine 302, glutamine 322, glycine 323, and threonine 327 each contribute to the tetradecanoyl-AMP site. The ATP site is built by glycine 323 and threonine 327. Glutamate 328 lines the Mg(2+) pocket. ATP-binding residues include aspartate 418, lysine 435, lysine 439, and tryptophan 444. Aspartate 418, lysine 435, and lysine 439 together coordinate tetradecanoyl-AMP.

It belongs to the ATP-dependent AMP-binding enzyme family. As to quaternary structure, forms a domain swapped homodimer. Mg(2+) serves as cofactor.

It catalyses the reaction a long-chain fatty acid + ATP + CoA = a long-chain fatty acyl-CoA + AMP + diphosphate. The enzyme catalyses tetradecanoate + ATP + CoA = tetradecanoyl-CoA + AMP + diphosphate. The catalysed reaction is hexadecanoate + ATP + CoA = hexadecanoyl-CoA + AMP + diphosphate. Its pathway is lipid metabolism; fatty acid metabolism. In terms of biological role, catalyzes the esterification of a number of long chain fatty acids with CoA, resulting in the formation of long-chain fatty acyl-CoA. Myristate (C14) is the most efficiently processed fatty acid, followed by palmitate (C16). Also catalyzes the esterification of stearate (C18) and laurate (C12), but at lower efficiency. Does not catalyze the esterification of the unsaturated fatty acids mysteroleic and palmitoleic acids in vitro. The polypeptide is Long-chain-fatty-acid--CoA ligase (Thermus thermophilus (strain ATCC 27634 / DSM 579 / HB8)).